Reading from the N-terminus, the 215-residue chain is FGFR1 oncogene partner 2 homolog (215 aa).

Coiled coils occupy residues 5–104 (IEKA…MSKY) and 161–185 (KEQE…ITRE). The interval 194–215 (DASESTSLSALVTNSDLSLRKN) is disordered. Over residues 197 to 215 (ESTSLSALVTNSDLSLRKN) the composition is skewed to polar residues.

The protein belongs to the SIKE family.

The protein localises to the cytoplasm. Functionally, may be involved in wound healing pathway. The chain is FGFR1 oncogene partner 2 homolog (FGFR1OP2) from Pongo abelii (Sumatran orangutan).